The following is a 68-amino-acid chain: MSAAEDTRSKTDDQLKDSLLELKKEQFNLRFQAASGQLENTARVRTVRREIARIKSVRGERNRAPQAK.

It belongs to the universal ribosomal protein uL29 family.

In Rhodospirillum rubrum (strain ATCC 11170 / ATH 1.1.1 / DSM 467 / LMG 4362 / NCIMB 8255 / S1), this protein is Large ribosomal subunit protein uL29.